The chain runs to 439 residues: Xylose isomerase (439 aa).

Catalysis depends on residues histidine 101 and aspartate 104. Mg(2+) is bound by residues glutamate 232, glutamate 268, histidine 271, aspartate 296, aspartate 307, aspartate 309, and aspartate 339.

This sequence belongs to the xylose isomerase family. Homotetramer. Mg(2+) serves as cofactor.

The protein resides in the cytoplasm. It catalyses the reaction alpha-D-xylose = alpha-D-xylulofuranose. This chain is Xylose isomerase, found in Marinomonas sp. (strain MWYL1).